A 447-amino-acid polypeptide reads, in one-letter code: Phosphoglucosamine mutase (447 aa).

Serine 100 functions as the Phosphoserine intermediate in the catalytic mechanism. Mg(2+) contacts are provided by serine 100, aspartate 239, aspartate 241, and aspartate 243. At serine 100 the chain carries Phosphoserine.

This sequence belongs to the phosphohexose mutase family. Mg(2+) is required as a cofactor. Post-translationally, activated by phosphorylation.

It catalyses the reaction alpha-D-glucosamine 1-phosphate = D-glucosamine 6-phosphate. Functionally, catalyzes the conversion of glucosamine-6-phosphate to glucosamine-1-phosphate. The chain is Phosphoglucosamine mutase from Dictyoglomus turgidum (strain DSM 6724 / Z-1310).